A 113-amino-acid polypeptide reads, in one-letter code: Large ribosomal subunit protein bL19 (113 aa).

Belongs to the bacterial ribosomal protein bL19 family.

Functionally, this protein is located at the 30S-50S ribosomal subunit interface and may play a role in the structure and function of the aminoacyl-tRNA binding site. This Mycolicibacterium smegmatis (strain ATCC 700084 / mc(2)155) (Mycobacterium smegmatis) protein is Large ribosomal subunit protein bL19.